The chain runs to 139 residues: MDTIGHHYIVEAAGCDPNVIGDANKIREIFLEAAKRGNMEVKASYFFKFSPMGVSGVVIVAESHISVHTWPEKGYAALDVYTCGENADPEKAVDYILEQFKAQYAHVSEIKRGIEEEDRTFTHTILTWEERLDRRNGKP.

S63 functions as the Schiff-base intermediate with substrate; via pyruvic acid in the catalytic mechanism. S63 bears the Pyruvic acid (Ser); by autocatalysis mark. The Proton acceptor; for processing activity role is filled by H68. Residue C83 is the Proton donor; for catalytic activity of the active site.

Belongs to the prokaryotic AdoMetDC family. Type 1 subfamily. Heterotetramer of two alpha and two beta chains arranged as a dimer of alpha/beta heterodimers. Pyruvate is required as a cofactor. Post-translationally, is synthesized initially as an inactive proenzyme. Formation of the active enzyme involves a self-maturation process in which the active site pyruvoyl group is generated from an internal serine residue via an autocatalytic post-translational modification. Two non-identical subunits are generated from the proenzyme in this reaction, and the pyruvate is formed at the N-terminus of the alpha chain, which is derived from the carboxyl end of the proenzyme. The post-translation cleavage follows an unusual pathway, termed non-hydrolytic serinolysis, in which the side chain hydroxyl group of the serine supplies its oxygen atom to form the C-terminus of the beta chain, while the remainder of the serine residue undergoes an oxidative deamination to produce ammonia and the pyruvoyl group blocking the N-terminus of the alpha chain.

The enzyme catalyses S-adenosyl-L-methionine + H(+) = S-adenosyl 3-(methylsulfanyl)propylamine + CO2. It participates in amine and polyamine biosynthesis; S-adenosylmethioninamine biosynthesis; S-adenosylmethioninamine from S-adenosyl-L-methionine: step 1/1. Catalyzes the decarboxylation of S-adenosylmethionine to S-adenosylmethioninamine (dcAdoMet), the propylamine donor required for the synthesis of the polyamines spermine and spermidine from the diamine putrescine. This is S-adenosylmethionine decarboxylase proenzyme from Pyrococcus horikoshii (strain ATCC 700860 / DSM 12428 / JCM 9974 / NBRC 100139 / OT-3).